The sequence spans 775 residues: Subtilisin-like protease SBT1.2 (775 aa).

Residues 1-20 form the signal peptide; the sequence is MEPKPFFLCIIFLLFCSSSS. Positions 27 to 111 constitute an Inhibitor I9 domain; sequence TYIVQLHPNS…AVRPDHVLQV (85 aa). Residues 116 to 618 form the Peptidase S8 domain; the sequence is SYKFLGLDGF…AGHVNPQKAI (503 aa). Active-site charge relay system residues include aspartate 146 and histidine 222. Positions 388–470 constitute a PA domain; that stretch reads GGDKGSEFCL…YTESVLLKAY (83 aa). Residues asparagine 472 and asparagine 544 are each glycosylated (N-linked (GlcNAc...) asparagine). Serine 552 functions as the Charge relay system in the catalytic mechanism. Asparagine 652 carries N-linked (GlcNAc...) asparagine glycosylation.

This sequence belongs to the peptidase S8 family. As to expression, mostly expressed in leaves and cotyledons (especially in epidermal cells), and, to a lower extent, in floral buds, stems, and siliques. Strongly expressed in stomatal precursor cells (meristemoids and guard mother cells).

It is found in the secreted. The protein resides in the extracellular space. It localises to the apoplast. Its subcellular location is the cell membrane. Serine protease involved in the negative regulation of stomatal density and distribution. Not active on EPFL6 (AC Q1PEY6). Positive regulator of water use efficiency (WUE). The chain is Subtilisin-like protease SBT1.2 from Arabidopsis thaliana (Mouse-ear cress).